A 67-amino-acid chain; its full sequence is MPQLDTTTWFITILSMLITLFILFQTKLLNYTYPLNALPISPNVTNHLTPWKMKWTKTYLPLSLPLQ.

A helical transmembrane segment spans residues 8–24; it reads TWFITILSMLITLFILF. Lysine 54 is modified (N6-acetyllysine; alternate). Lysine 54 is modified (N6-succinyllysine; alternate). An N6-acetyllysine modification is found at lysine 57.

It belongs to the ATPase protein 8 family. Component of the ATP synthase complex composed at least of ATP5F1A/subunit alpha, ATP5F1B/subunit beta, ATP5MC1/subunit c (homooctomer), MT-ATP6/subunit a, MT-ATP8/subunit 8, ATP5ME/subunit e, ATP5MF/subunit f, ATP5MG/subunit g, ATP5MK/subunit k, ATP5MJ/subunit j, ATP5F1C/subunit gamma, ATP5F1D/subunit delta, ATP5F1E/subunit epsilon, ATP5PF/subunit F6, ATP5PB/subunit b, ATP5PD/subunit d, ATP5PO/subunit OSCP. ATP synthase complex consists of a soluble F(1) head domain (subunits alpha(3) and beta(3)) - the catalytic core - and a membrane F(0) domain - the membrane proton channel (subunits c, a, 8, e, f, g, k and j). These two domains are linked by a central stalk (subunits gamma, delta, and epsilon) rotating inside the F1 region and a stationary peripheral stalk (subunits F6, b, d, and OSCP). Interacts with PRICKLE3.

Its subcellular location is the mitochondrion membrane. Its function is as follows. Subunit 8, of the mitochondrial membrane ATP synthase complex (F(1)F(0) ATP synthase or Complex V) that produces ATP from ADP in the presence of a proton gradient across the membrane which is generated by electron transport complexes of the respiratory chain. ATP synthase complex consist of a soluble F(1) head domain - the catalytic core - and a membrane F(1) domain - the membrane proton channel. These two domains are linked by a central stalk rotating inside the F(1) region and a stationary peripheral stalk. During catalysis, ATP synthesis in the catalytic domain of F(1) is coupled via a rotary mechanism of the central stalk subunits to proton translocation. In vivo, can only synthesize ATP although its ATP hydrolase activity can be activated artificially in vitro. Part of the complex F(0) domain. The chain is ATP synthase F(0) complex subunit 8 from Dugong dugon (Dugong).